The sequence spans 425 residues: Glucan endo-1,3-beta-glucosidase 10 (425 aa).

Residues M1–S26 form the signal peptide. Catalysis depends on E119, which acts as the Proton donor. N124 is a glycosylation site (N-linked (GlcNAc...) asparagine). E266 acts as the Nucleophile in catalysis. Residues G347–P387 form a disordered region. Low complexity predominate over residues T350–G366. N-linked (GlcNAc...) asparagine glycosylation is present at N362. Over residues S367 to I384 the composition is skewed to gly residues. The GPI-anchor amidated serine moiety is linked to residue S401. Positions A402–L425 are cleaved as a propeptide — removed in mature form.

The protein belongs to the glycosyl hydrolase 17 family. As to expression, highly expressed in flowers and siliques.

Its subcellular location is the cell membrane. It is found in the cell junction. The protein localises to the plasmodesma. The enzyme catalyses Hydrolysis of (1-&gt;3)-beta-D-glucosidic linkages in (1-&gt;3)-beta-D-glucans.. Plasmodesmal-associated membrane beta-1,3-glucanase involved in plasmodesmal callose degradation and functions in the gating of plasmodesmata. This is Glucan endo-1,3-beta-glucosidase 10 from Arabidopsis thaliana (Mouse-ear cress).